Here is a 160-residue protein sequence, read N- to C-terminus: Transmembrane protein 191A (160 aa).

The chain crosses the membrane as a helical span at residues 24-44 (FCFPLDFVSNLFWIFASKFII).

Belongs to the TMEM191 family.

Its subcellular location is the membrane. This chain is Transmembrane protein 191A (TMEM191A), found in Homo sapiens (Human).